Here is a 257-residue protein sequence, read N- to C-terminus: Pyridoxine 5'-phosphate synthase (257 aa).

Residue Asn-16 participates in 3-amino-2-oxopropyl phosphate binding. Residue 18–19 (DH) coordinates 1-deoxy-D-xylulose 5-phosphate. Arg-27 provides a ligand contact to 3-amino-2-oxopropyl phosphate. His-52 (proton acceptor) is an active-site residue. Arg-54 and His-59 together coordinate 1-deoxy-D-xylulose 5-phosphate. The active-site Proton acceptor is Glu-79. 1-deoxy-D-xylulose 5-phosphate is bound at residue Thr-109. The active-site Proton donor is His-200. 3-amino-2-oxopropyl phosphate-binding positions include Gly-201 and 222–223 (GH).

This sequence belongs to the PNP synthase family. As to quaternary structure, homooctamer; tetramer of dimers.

It localises to the cytoplasm. It carries out the reaction 3-amino-2-oxopropyl phosphate + 1-deoxy-D-xylulose 5-phosphate = pyridoxine 5'-phosphate + phosphate + 2 H2O + H(+). The protein operates within cofactor biosynthesis; pyridoxine 5'-phosphate biosynthesis; pyridoxine 5'-phosphate from D-erythrose 4-phosphate: step 5/5. In terms of biological role, catalyzes the complicated ring closure reaction between the two acyclic compounds 1-deoxy-D-xylulose-5-phosphate (DXP) and 3-amino-2-oxopropyl phosphate (1-amino-acetone-3-phosphate or AAP) to form pyridoxine 5'-phosphate (PNP) and inorganic phosphate. The chain is Pyridoxine 5'-phosphate synthase from Burkholderia pseudomallei (strain 1710b).